A 337-amino-acid polypeptide reads, in one-letter code: Fructose-1,6-bisphosphatase class 1 (337 aa).

Positions 94, 116, 118, and 119 each coordinate Mg(2+). Substrate is bound by residues 119-122 (DGSS), Asn210, and Lys276. A Mg(2+)-binding site is contributed by Glu282.

It belongs to the FBPase class 1 family. In terms of assembly, homotetramer. The cofactor is Mg(2+).

The protein resides in the cytoplasm. It carries out the reaction beta-D-fructose 1,6-bisphosphate + H2O = beta-D-fructose 6-phosphate + phosphate. Its pathway is carbohydrate biosynthesis; gluconeogenesis. This Burkholderia vietnamiensis (strain G4 / LMG 22486) (Burkholderia cepacia (strain R1808)) protein is Fructose-1,6-bisphosphatase class 1.